The following is a 120-amino-acid chain: UPF0231 protein YacL (120 aa).

The protein belongs to the UPF0231 family.

The protein is UPF0231 protein YacL (yacL) of Shigella flexneri.